The sequence spans 194 residues: MVENEKTSVEETEEKAETEDEMLTEDPSNEDSDEANEEGNELSEEEKRIAELEGQVDELNQRLLRIQADYDNFRRRQREEKEAAAKYRAQSLIEELLPALDNFERALLVEPEQEETKTLLKGMEMVYRQVSEALKKEGLEVIETKGETFDPHLHQAVMQVEDAEFESNEIVEELQKGYKLKDRVIRPSMVKVNA.

A disordered region spans residues 1–53; it reads MVENEKTSVEETEEKAETEDEMLTEDPSNEDSDEANEEGNELSEEEKRIAELE. Residues 10 to 44 show a composition bias toward acidic residues; sequence EETEEKAETEDEMLTEDPSNEDSDEANEEGNELSE.

Belongs to the GrpE family. As to quaternary structure, homodimer.

The protein resides in the cytoplasm. In terms of biological role, participates actively in the response to hyperosmotic and heat shock by preventing the aggregation of stress-denatured proteins, in association with DnaK and GrpE. It is the nucleotide exchange factor for DnaK and may function as a thermosensor. Unfolded proteins bind initially to DnaJ; upon interaction with the DnaJ-bound protein, DnaK hydrolyzes its bound ATP, resulting in the formation of a stable complex. GrpE releases ADP from DnaK; ATP binding to DnaK triggers the release of the substrate protein, thus completing the reaction cycle. Several rounds of ATP-dependent interactions between DnaJ, DnaK and GrpE are required for fully efficient folding. The sequence is that of Protein GrpE from Halalkalibacterium halodurans (strain ATCC BAA-125 / DSM 18197 / FERM 7344 / JCM 9153 / C-125) (Bacillus halodurans).